The following is a 253-amino-acid chain: Ubiquinone biosynthesis O-methyltransferase (253 aa).

The S-adenosyl-L-methionine site is built by Arg47, Gly78, Asp99, and Met141.

Belongs to the methyltransferase superfamily. UbiG/COQ3 family.

It catalyses the reaction a 3-demethylubiquinol + S-adenosyl-L-methionine = a ubiquinol + S-adenosyl-L-homocysteine + H(+). The catalysed reaction is a 3-(all-trans-polyprenyl)benzene-1,2-diol + S-adenosyl-L-methionine = a 2-methoxy-6-(all-trans-polyprenyl)phenol + S-adenosyl-L-homocysteine + H(+). The protein operates within cofactor biosynthesis; ubiquinone biosynthesis. O-methyltransferase that catalyzes the 2 O-methylation steps in the ubiquinone biosynthetic pathway. The sequence is that of Ubiquinone biosynthesis O-methyltransferase from Rhodopseudomonas palustris (strain BisA53).